The chain runs to 101 residues: Citrate lyase acyl carrier protein (101 aa).

O-(phosphoribosyl dephospho-coenzyme A)serine is present on Ser-14.

It belongs to the CitD family. Oligomer with a subunit composition of (alpha,beta,gamma)6.

The protein localises to the cytoplasm. In terms of biological role, covalent carrier of the coenzyme of citrate lyase. The sequence is that of Citrate lyase acyl carrier protein from Latilactobacillus sakei subsp. sakei (strain 23K) (Lactobacillus sakei subsp. sakei).